Reading from the N-terminus, the 1012-residue chain is Multiple C2 domain and transmembrane region protein 10 (1012 aa).

The 115-residue stretch at 1-115 (MTEAKTGTGN…REGESVVQLY (115 aa)) folds into the C2 1 domain. The disordered stretch occupies residues 141-203 (ENGENVRRVN…SQQNGQGQRM (63 aa)). Over residues 148–160 (RVNRSGGSKKSKK) the composition is skewed to basic residues. 2 stretches are compositionally biased toward low complexity: residues 161 to 180 (VQNV…QQQQ) and 188 to 202 (RGNQ…QGQR). C2 domains are found at residues 262-376 (SSHK…PQWY), 411-551 (KAGN…SRWF), and 585-710 (YNSD…THSY). Ca(2+) is bound by residues glutamate 296, glutamate 344, asparagine 346, and glutamate 349. 3 helical membrane passes run 810–830 (FFRL…VEVM), 841–861 (VFVL…PCLL), and 952–972 (ATFL…TVPV).

Belongs to the MCTP family. The cofactor is Ca(2+). In terms of tissue distribution, highly expressed in roots meristems, shoot apical meristems (SAMs) and in incipient leaf primordia. Observed in flowers.

Its subcellular location is the endoplasmic reticulum membrane. Functionally, may function as a signaling molecule by regulating the trafficking of other regulators. This is Multiple C2 domain and transmembrane region protein 10 from Arabidopsis thaliana (Mouse-ear cress).